Reading from the N-terminus, the 375-residue chain is 23S rRNA (uracil(747)-C(5))-methyltransferase RlmC (375 aa).

Positions 3, 11, 14, and 87 each coordinate [4Fe-4S] cluster. S-adenosyl-L-methionine contacts are provided by glutamine 212, phenylalanine 241, glutamate 262, and asparagine 307. The Nucleophile role is filled by cysteine 334.

It belongs to the class I-like SAM-binding methyltransferase superfamily. RNA M5U methyltransferase family. RlmC subfamily.

The enzyme catalyses uridine(747) in 23S rRNA + S-adenosyl-L-methionine = 5-methyluridine(747) in 23S rRNA + S-adenosyl-L-homocysteine + H(+). Functionally, catalyzes the formation of 5-methyl-uridine at position 747 (m5U747) in 23S rRNA. This chain is 23S rRNA (uracil(747)-C(5))-methyltransferase RlmC, found in Salmonella arizonae (strain ATCC BAA-731 / CDC346-86 / RSK2980).